A 1320-amino-acid polypeptide reads, in one-letter code: Sal-like protein 3 (1320 aa).

A compositionally biased stretch (basic residues) spans 1–11; that stretch reads MSRRKQAKPQH. Positions 1 to 49 are disordered; sequence MSRRKQAKPQHLKSDEELPPQDGASEHGVPGDGAEDADSGSESRSGSEE. Over residues 40–49 the composition is skewed to low complexity; the sequence is GSESRSGSEE. The C2H2-type 1; atypical zinc-finger motif lies at 51–73; that stretch reads SVCEKCCAEFFKWADFLQHKKTC. Disordered regions lie at residues 84–166 and 271–367; these read DDEP…AFSM and LSAG…NLPN. Residues 88–100 are compositionally biased toward pro residues; the sequence is APPSEDFPEPSPA. S109 carries the post-translational modification Phosphoserine. Residues 121 to 131 are compositionally biased toward basic and acidic residues; that stretch reads SEVKAATKEAE. Pro residues predominate over residues 143–160; it reads PPGPSVPPPPPALPPQPE. A compositionally biased stretch (low complexity) spans 271–289; sequence LSAGPATASAGSGSTLPAA. Over residues 295-311 the composition is skewed to polar residues; it reads HLSQPASGTSTPCSTSA. 2 stretches are compositionally biased toward low complexity: residues 323-342 and 355-367; these read STGP…GNAV and PGPL…NLPN. 2 C2H2-type zinc fingers span residues 427-449 and 455-477; these read HKCR…LRSH and FKCN…FQRH. The segment at 534–623 is disordered; it reads GLQLPPTVPG…RTGDAPVVGG (90 aa). A compositionally biased stretch (polar residues) spans 543–554; that stretch reads GTHNYTDSPSIT. Positions 555 to 568 are enriched in low complexity; the sequence is PVSRSPQRPSPASS. The span at 569–583 shows a compositional bias: polar residues; it reads ECTSLSPGLNNTESG. 3 consecutive C2H2-type zinc fingers follow at residues 692-714, 720-742, and 752-774; these read NQCV…YRTH, FKCK…FGVH, and HSCP…IRMH. 2 disordered regions span residues 807–846 and 878–972; these read SSFD…PPSP and VENG…GHPG. The span at 809–823 shows a compositional bias: acidic residues; the sequence is FDDDIDENSMEEDSE. 2 stretches are compositionally biased toward low complexity: residues 834–846 and 902–923; these read PLLS…PPSP and RSAG…PAHS. S932 is subject to Phosphoserine. 4 consecutive C2H2-type zinc fingers follow at residues 997-1019, 1025-1047, 1133-1155, and 1161-1183; these read TVCG…YRSH, FVCT…LLTH, HNCQ…ERTH, and FGCT…MGTH. The residue at position 1197 (S1197) is a Phosphoserine.

This sequence belongs to the sal C2H2-type zinc-finger protein family. In adult brain, testis and kidney. In lower levels also in adult ovaries and embryonic stem cells. In embryo in developing neuroectoderm of brain, inner ear and spinal cord. Also weakly and transiently expressed in embryonic branchial arches, notochord, limb buds and heart.

The protein resides in the nucleus. Probable transcription factor. This Mus musculus (Mouse) protein is Sal-like protein 3 (Sall3).